We begin with the raw amino-acid sequence, 76 residues long: Conotoxin VnMSGL-0112 (76 aa).

The signal sequence occupies residues M1–S20. Residues H21–R45 constitute a propeptide that is removed on maturation. 3 disulfides stabilise this stretch: C49–C61, C53–C70, and C60–C74.

Belongs to the conotoxin O3 superfamily. As to expression, expressed by the venom duct.

It localises to the secreted. The polypeptide is Conotoxin VnMSGL-0112 (Conus ventricosus (Mediterranean cone)).